A 146-amino-acid polypeptide reads, in one-letter code: 3-hydroxyacyl-[acyl-carrier-protein] dehydratase FabZ (146 aa).

Residue His49 is part of the active site.

Belongs to the thioester dehydratase family. FabZ subfamily.

It is found in the cytoplasm. It catalyses the reaction a (3R)-hydroxyacyl-[ACP] = a (2E)-enoyl-[ACP] + H2O. Its function is as follows. Involved in unsaturated fatty acids biosynthesis. Catalyzes the dehydration of short chain beta-hydroxyacyl-ACPs and long chain saturated and unsaturated beta-hydroxyacyl-ACPs. The polypeptide is 3-hydroxyacyl-[acyl-carrier-protein] dehydratase FabZ (Pseudomonas fluorescens (strain ATCC BAA-477 / NRRL B-23932 / Pf-5)).